Consider the following 315-residue polypeptide: uncharacterized protein (315 aa).

Basic residues predominate over residues 296-308 (RSKLRKGTHKRTP). Residues 296–315 (RSKLRKGTHKRTPGRAGDAD) are disordered.

This sequence belongs to the metallo-dependent hydrolases superfamily. Peptidase M19 family.

This is an uncharacterized protein from Acinetobacter calcoaceticus.